The following is a 55-amino-acid chain: MASSTDVRPKITMACEVCKHRNYITKKNRRNDPDRMELKKFCRNCGKHQSHRETR.

The protein belongs to the bacterial ribosomal protein bL33 family.

The chain is Large ribosomal subunit protein bL33 from Mycobacterium leprae (strain Br4923).